Reading from the N-terminus, the 717-residue chain is Fatty acid oxidation complex subunit alpha (717 aa).

Residues 1–189 (MIYQSPTIEV…KVGAIDAVVA (189 aa)) form an enoyl-CoA hydratase/isomerase region. D296 contacts substrate. The interval 311-717 (KKVNSAAVLG…ANNGSYYQQA (407 aa)) is 3-hydroxyacyl-CoA dehydrogenase. Residues M324, D343, 400-402 (VVE), K407, and S429 each bind NAD(+). H450 acts as the For 3-hydroxyacyl-CoA dehydrogenase activity in catalysis. Residue N453 coordinates NAD(+). Substrate-binding residues include N500 and Y660.

This sequence in the N-terminal section; belongs to the enoyl-CoA hydratase/isomerase family. The protein in the C-terminal section; belongs to the 3-hydroxyacyl-CoA dehydrogenase family. Heterotetramer of two alpha chains (FadB) and two beta chains (FadA).

The catalysed reaction is a (3S)-3-hydroxyacyl-CoA + NAD(+) = a 3-oxoacyl-CoA + NADH + H(+). The enzyme catalyses a (3S)-3-hydroxyacyl-CoA = a (2E)-enoyl-CoA + H2O. It catalyses the reaction a 4-saturated-(3S)-3-hydroxyacyl-CoA = a (3E)-enoyl-CoA + H2O. It carries out the reaction (3S)-3-hydroxybutanoyl-CoA = (3R)-3-hydroxybutanoyl-CoA. The catalysed reaction is a (3Z)-enoyl-CoA = a 4-saturated (2E)-enoyl-CoA. The enzyme catalyses a (3E)-enoyl-CoA = a 4-saturated (2E)-enoyl-CoA. The protein operates within lipid metabolism; fatty acid beta-oxidation. Its function is as follows. Involved in the aerobic and anaerobic degradation of long-chain fatty acids via beta-oxidation cycle. Catalyzes the formation of 3-oxoacyl-CoA from enoyl-CoA via L-3-hydroxyacyl-CoA. It can also use D-3-hydroxyacyl-CoA and cis-3-enoyl-CoA as substrate. This Shewanella pealeana (strain ATCC 700345 / ANG-SQ1) protein is Fatty acid oxidation complex subunit alpha.